Here is a 230-residue protein sequence, read N- to C-terminus: Cytidylate kinase (230 aa).

Residue 11–19 participates in ATP binding; that stretch reads GPAAAGKST.

The protein belongs to the cytidylate kinase family. Type 1 subfamily.

It localises to the cytoplasm. The enzyme catalyses CMP + ATP = CDP + ADP. It catalyses the reaction dCMP + ATP = dCDP + ADP. The chain is Cytidylate kinase from Oceanobacillus iheyensis (strain DSM 14371 / CIP 107618 / JCM 11309 / KCTC 3954 / HTE831).